Here is a 269-residue protein sequence, read N- to C-terminus: Formamidopyrimidine-DNA glycosylase (269 aa).

The active-site Schiff-base intermediate with DNA is Pro-2. Glu-3 functions as the Proton donor in the catalytic mechanism. The Proton donor; for beta-elimination activity role is filled by Lys-57. 3 residues coordinate DNA: His-90, Arg-109, and Lys-150. Residues 235 to 269 form an FPG-type zinc finger; it reads QVYGRKGEPCRVCGTPIVATKHAQRATFYCRQCQK. The active-site Proton donor; for delta-elimination activity is the Arg-259.

It belongs to the FPG family. As to quaternary structure, monomer. Requires Zn(2+) as cofactor.

It carries out the reaction Hydrolysis of DNA containing ring-opened 7-methylguanine residues, releasing 2,6-diamino-4-hydroxy-5-(N-methyl)formamidopyrimidine.. It catalyses the reaction 2'-deoxyribonucleotide-(2'-deoxyribose 5'-phosphate)-2'-deoxyribonucleotide-DNA = a 3'-end 2'-deoxyribonucleotide-(2,3-dehydro-2,3-deoxyribose 5'-phosphate)-DNA + a 5'-end 5'-phospho-2'-deoxyribonucleoside-DNA + H(+). Its function is as follows. Involved in base excision repair of DNA damaged by oxidation or by mutagenic agents. Acts as a DNA glycosylase that recognizes and removes damaged bases. Has a preference for oxidized purines, such as 7,8-dihydro-8-oxoguanine (8-oxoG). Has AP (apurinic/apyrimidinic) lyase activity and introduces nicks in the DNA strand. Cleaves the DNA backbone by beta-delta elimination to generate a single-strand break at the site of the removed base with both 3'- and 5'-phosphates. The protein is Formamidopyrimidine-DNA glycosylase of Escherichia coli O7:K1 (strain IAI39 / ExPEC).